A 462-amino-acid polypeptide reads, in one-letter code: 3beta-hydroxysteroid dehydrogenase/Delta(5)-Delta(4) isomerase 1 (462 aa).

NAD(+)-binding positions include 51–56 (GGAGHL), tyrosine 220, and lysine 224. Residue lysine 224 is the Proton donor of the active site. Transmembrane regions (helical) follow at residues 321–341 (VGTF…SSMI) and 428–448 (VAVL…FTFW).

This sequence belongs to the 3-beta-HSD family. In terms of tissue distribution, expressed exclusively in the neuron-like XXX(L/R) cells through all four larval stages and becomes fainter in adults.

It is found in the membrane. It catalyses the reaction a 3beta-hydroxy-Delta(5)-steroid + NAD(+) = a 3-oxo-Delta(5)-steroid + NADH + H(+). The catalysed reaction is cholesterol + NAD(+) = cholest-5-en-3-one + NADH + H(+). It carries out the reaction a 3-oxo-Delta(5)-steroid = a 3-oxo-Delta(4)-steroid. The enzyme catalyses cholest-5-en-3-one = cholest-4-en-3-one. It participates in steroid hormone biosynthesis; dafachronic acid biosynthesis. Hydroxysteroid dehydrogenase involved in the biosynthesis of dafrachonic acids. Catalyzes the dehydrogenation of cholesterol or its derivatives and the isomerization of the double carbon bond on the sterol ring. Modifies sterols into a Delta(4)-3-keto-sterols such as cholest-4-en-3-one, precursor of Delta(4)-dafachronic acid. Contributes to the production of Delta(7)-dafachronic acid in the XXX cells. Dafachronic acids act as ligands and bind directly to the nuclear hormone receptor (NHR) daf-12 suppressing dauer formation and inducing reproductive growth. Acts in parallel to AKT-1 to promote reproductive development via DAF-16/FoxO and DAF-12. This is 3beta-hydroxysteroid dehydrogenase/Delta(5)-Delta(4) isomerase 1 from Caenorhabditis elegans.